The primary structure comprises 1049 residues: Toll-like receptor 7 (1049 aa).

The N-terminal stretch at 1–26 is a signal peptide; the sequence is MVFPMWTLKRQILILFNIILISKLLG. Residues 27–839 lie on the Extracellular side of the membrane; it reads ARWFPKTLPC…LYTCELDLTN (813 aa). LRR repeat units lie at residues 43–64, 65–87, 110–126, 127–149, 151–170, and 171–195; these read PKNH…GGIP, TNTT…SFHR, NMCI…FSGL, TYLK…LPPS, QLLS…NLTE, and LANI…SYSI. Residues Asn66 and Asn69 are each glycosylated (N-linked (GlcNAc...) asparagine). Residue Asn167 is glycosylated (N-linked (GlcNAc...) asparagine). 2 N-linked (GlcNAc...) asparagine glycosylation sites follow: Asn202 and Asn215. LRR repeat units lie at residues 203-226, 228-247, 248-275, 289-312, 314-337, 339-368, 369-392, 396-419, and 421-443; these read LTKL…LPST, TELY…DFNN, LNQL…PCKN, LTEL…WFKN, NKLQ…KFLH, LPSL…AFSS, LKSL…NLSP, LQNL…MFKQ, and KRLK…SEVG. Asn361 carries an N-linked (GlcNAc...) asparagine glycan. N-linked (GlcNAc...) asparagine glycosylation occurs at Asn413. An N-linked (GlcNAc...) asparagine glycan is attached at Asn488. LRR repeat units lie at residues 492–515, 516–540, 541–564, and 566–588; these read YKYG…DFQH, LSFL…EFQP, LAEL…AFEE, and HKLE…ITHM. Asn523 and Asn534 each carry an N-linked (GlcNAc...) asparagine glycan. Asn590 carries N-linked (GlcNAc...) asparagine glycosylation. LRR repeat units lie at residues 595 to 618, 619 to 644, 649 to 672, 674 to 697, 698 to 721, 723 to 745, 746 to 769, and 772 to 795; these read LKVL…TMES, ESLR…RYLQ, LLKL…VFDG, PPNL…KLQC, LKNL…LSNC, RSLK…FLQD, AFQL…SFPE, and LNNL…VWFV. N-linked (GlcNAc...) asparagine glycosylation is found at Asn679 and Asn720. N-linked (GlcNAc...) asparagine glycosylation is present at Asn799. The helical transmembrane segment at 840 to 860 threads the bilayer; sequence LILFSLSISVSLFLMVMMTAS. The Cytoplasmic segment spans residues 861–1049; that stretch reads HLYFWDVWYI…AYSQVFKETV (189 aa). Residues 889–1033 form the TIR domain; sequence CCYDAFIVYD…YFWQCLKNAL (145 aa).

It belongs to the Toll-like receptor family. Homodimer. Interacts with MYD88 via their respective TIR domains. Interacts with UNC93B1. Interacts with SMPDL3B. In terms of tissue distribution, detected in brain, placenta, spleen, stomach, small intestine, lung and in plasmacytoid pre-dendritic cells. Expressed in peripheral mononuclear blood cells.

The protein resides in the endoplasmic reticulum membrane. It localises to the endosome. Its subcellular location is the lysosome. It is found in the cytoplasmic vesicle. The protein localises to the phagosome. With respect to regulation, activated by guanosine analogs including deoxyguanosine, 7-thia-8-oxoguanosine or 7-deazaguanosine in a RNA-independent manner. Activated by imiquimod. In terms of biological role, endosomal receptor that plays a key role in innate and adaptive immunity. Controls host immune response against pathogens through recognition of uridine-containing single strand RNAs (ssRNAs) of viral origin or guanosine analogs. Upon binding to agonists, undergoes dimerization that brings TIR domains from the two molecules into direct contact, leading to the recruitment of TIR-containing downstream adapter MYD88 through homotypic interaction. In turn, the Myddosome signaling complex is formed involving IRAK4, IRAK1, TRAF6, TRAF3 leading to activation of downstream transcription factors NF-kappa-B and IRF7 to induce pro-inflammatory cytokines and interferons, respectively. In plasmacytoid dendritic cells, RNASET2 endonuclease cooperates with PLD3 or PLD4 5'-&gt;3' exonucleases to process RNA and release 2',3'-cyclic guanosine monophosphate (2',3'-cGMP) and cytidine-rich RNA fragments that occupy TLR7 ligand-binding pockets and trigger a signaling-competent state. This Homo sapiens (Human) protein is Toll-like receptor 7.